A 79-amino-acid polypeptide reads, in one-letter code: ATP synthase subunit c (79 aa).

Transmembrane regions (helical) follow at residues Ile-11–Leu-31 and Ile-55–Ile-75.

This sequence belongs to the ATPase C chain family. As to quaternary structure, F-type ATPases have 2 components, F(1) - the catalytic core - and F(0) - the membrane proton channel. F(1) has five subunits: alpha(3), beta(3), gamma(1), delta(1), epsilon(1). F(0) has three main subunits: a(1), b(2) and c(10-14). The alpha and beta chains form an alternating ring which encloses part of the gamma chain. F(1) is attached to F(0) by a central stalk formed by the gamma and epsilon chains, while a peripheral stalk is formed by the delta and b chains.

The protein localises to the cell membrane. F(1)F(0) ATP synthase produces ATP from ADP in the presence of a proton or sodium gradient. F-type ATPases consist of two structural domains, F(1) containing the extramembraneous catalytic core and F(0) containing the membrane proton channel, linked together by a central stalk and a peripheral stalk. During catalysis, ATP synthesis in the catalytic domain of F(1) is coupled via a rotary mechanism of the central stalk subunits to proton translocation. Its function is as follows. Key component of the F(0) channel; it plays a direct role in translocation across the membrane. A homomeric c-ring of between 10-14 subunits forms the central stalk rotor element with the F(1) delta and epsilon subunits. The protein is ATP synthase subunit c of Wigglesworthia glossinidia brevipalpis.